A 95-amino-acid chain; its full sequence is Aspartyl/glutamyl-tRNA(Asn/Gln) amidotransferase subunit C (95 aa).

This sequence belongs to the GatC family. Heterotrimer of A, B and C subunits.

It catalyses the reaction L-glutamyl-tRNA(Gln) + L-glutamine + ATP + H2O = L-glutaminyl-tRNA(Gln) + L-glutamate + ADP + phosphate + H(+). The catalysed reaction is L-aspartyl-tRNA(Asn) + L-glutamine + ATP + H2O = L-asparaginyl-tRNA(Asn) + L-glutamate + ADP + phosphate + 2 H(+). Functionally, allows the formation of correctly charged Asn-tRNA(Asn) or Gln-tRNA(Gln) through the transamidation of misacylated Asp-tRNA(Asn) or Glu-tRNA(Gln) in organisms which lack either or both of asparaginyl-tRNA or glutaminyl-tRNA synthetases. The reaction takes place in the presence of glutamine and ATP through an activated phospho-Asp-tRNA(Asn) or phospho-Glu-tRNA(Gln). This is Aspartyl/glutamyl-tRNA(Asn/Gln) amidotransferase subunit C from Sinorhizobium fredii (strain NBRC 101917 / NGR234).